The primary structure comprises 232 residues: tRNA (guanine-N(1)-)-methyltransferase (232 aa).

S-adenosyl-L-methionine contacts are provided by residues glycine 111 and 131–136 (IGDYIL).

It belongs to the RNA methyltransferase TrmD family. As to quaternary structure, homodimer.

The protein resides in the cytoplasm. It catalyses the reaction guanosine(37) in tRNA + S-adenosyl-L-methionine = N(1)-methylguanosine(37) in tRNA + S-adenosyl-L-homocysteine + H(+). In terms of biological role, specifically methylates guanosine-37 in various tRNAs. The chain is tRNA (guanine-N(1)-)-methyltransferase from Bartonella quintana (strain Toulouse) (Rochalimaea quintana).